The following is a 126-amino-acid chain: Probable prefoldin subunit 4 (126 aa).

It belongs to the prefoldin subunit beta family. As to quaternary structure, heterohexamer of two PFD-alpha type and four PFD-beta type subunits.

In terms of biological role, binds specifically to cytosolic chaperonin (c-CPN) and transfers target proteins to it. Binds to nascent polypeptide chain and promotes folding in an environment in which there are many competing pathways for nonnative proteins. The sequence is that of Probable prefoldin subunit 4 (pfd-4) from Caenorhabditis elegans.